The following is a 198-amino-acid chain: Na(+)-translocating NADH-quinone reductase subunit E (198 aa).

6 consecutive transmembrane segments (helical) span residues 11–31, 39–59, 77–97, 110–130, 140–160, and 176–196; these read SIFI…FLAV, MGLG…NNLI, FLSF…LEMA, GIFL…SFMV, VVYG…MAGI, and LGIT…FSGI.

Belongs to the NqrDE/RnfAE family. As to quaternary structure, composed of six subunits; NqrA, NqrB, NqrC, NqrD, NqrE and NqrF.

The protein localises to the cell inner membrane. The enzyme catalyses a ubiquinone + n Na(+)(in) + NADH + H(+) = a ubiquinol + n Na(+)(out) + NAD(+). NQR complex catalyzes the reduction of ubiquinone-1 to ubiquinol by two successive reactions, coupled with the transport of Na(+) ions from the cytoplasm to the periplasm. NqrA to NqrE are probably involved in the second step, the conversion of ubisemiquinone to ubiquinol. The polypeptide is Na(+)-translocating NADH-quinone reductase subunit E (Aeromonas salmonicida (strain A449)).